The chain runs to 449 residues: 23S rRNA (uracil(1939)-C(5))-methyltransferase RlmD (449 aa).

Residues 1-66 (MGRSRYHNKL…AKFDEAKVVE (66 aa)) enclose the TRAM domain. Residues cysteine 79, cysteine 85, cysteine 88, and cysteine 169 each coordinate [4Fe-4S] cluster. S-adenosyl-L-methionine is bound by residues glutamine 280, phenylalanine 309, asparagine 314, glutamate 330, asparagine 357, and aspartate 379. Catalysis depends on cysteine 405, which acts as the Nucleophile.

This sequence belongs to the class I-like SAM-binding methyltransferase superfamily. RNA M5U methyltransferase family. RlmD subfamily.

The catalysed reaction is uridine(1939) in 23S rRNA + S-adenosyl-L-methionine = 5-methyluridine(1939) in 23S rRNA + S-adenosyl-L-homocysteine + H(+). Functionally, catalyzes the formation of 5-methyl-uridine at position 1939 (m5U1939) in 23S rRNA. The polypeptide is 23S rRNA (uracil(1939)-C(5))-methyltransferase RlmD (Francisella tularensis subsp. holarctica (strain LVS)).